A 510-amino-acid polypeptide reads, in one-letter code: Glutamyl-tRNA(Gln) amidotransferase subunit A (510 aa).

Catalysis depends on charge relay system residues Lys82 and Ser157. The Acyl-ester intermediate role is filled by Ser181.

This sequence belongs to the amidase family. GatA subfamily. In terms of assembly, heterotrimer of A, B and C subunits.

It carries out the reaction L-glutamyl-tRNA(Gln) + L-glutamine + ATP + H2O = L-glutaminyl-tRNA(Gln) + L-glutamate + ADP + phosphate + H(+). In terms of biological role, allows the formation of correctly charged Gln-tRNA(Gln) through the transamidation of misacylated Glu-tRNA(Gln) in organisms which lack glutaminyl-tRNA synthetase. The reaction takes place in the presence of glutamine and ATP through an activated gamma-phospho-Glu-tRNA(Gln). The sequence is that of Glutamyl-tRNA(Gln) amidotransferase subunit A from Bordetella avium (strain 197N).